A 663-amino-acid polypeptide reads, in one-letter code: Ras and EF-hand domain-containing protein (663 aa).

EF-hand domains follow at residues 1-33 (MNHA…CREL) and 35-70 (VPAD…VSEA). Residues Asp-14, Asn-16, Ser-18, Arg-20, Asp-25, Asp-48, Asp-50, Asp-52, Tyr-54, and Asp-59 each coordinate Ca(2+). Residues 122-297 (ELLLQQFEDL…LKKMVMEFQS (176 aa)) are a coiled coil. The span at 324 to 336 (SQENASTKRQLSP) shows a compositional bias: polar residues. The disordered stretch occupies residues 324–343 (SQENASTKRQLSPRNEVLPR). GTP-binding positions include 477–482 (GSGKSS), 580–583 (NKVD), and 615–616 (AK).

It belongs to the small GTPase superfamily. Rab family. As to quaternary structure, homodimer.

It is found in the cytoplasm. The protein localises to the perinuclear region. Its function is as follows. Binds predominantly GDP, and also GTP. The protein is Ras and EF-hand domain-containing protein (rasef) of Danio rerio (Zebrafish).